The chain runs to 972 residues: Isoleucine--tRNA ligase (972 aa).

The 'HIGH' region motif lies at 63–73 (PYANGNIHIGH). Glutamate 603 contributes to the L-isoleucyl-5'-AMP binding site. Residues 644-648 (KMSKS) carry the 'KMSKS' region motif. Lysine 647 serves as a coordination point for ATP.

This sequence belongs to the class-I aminoacyl-tRNA synthetase family. IleS type 1 subfamily. In terms of assembly, monomer.

It localises to the cytoplasm. It carries out the reaction tRNA(Ile) + L-isoleucine + ATP = L-isoleucyl-tRNA(Ile) + AMP + diphosphate. Functionally, catalyzes the attachment of isoleucine to tRNA(Ile). As IleRS can inadvertently accommodate and process structurally similar amino acids such as valine, to avoid such errors it has two additional distinct tRNA(Ile)-dependent editing activities. One activity is designated as 'pretransfer' editing and involves the hydrolysis of activated Val-AMP. The other activity is designated 'posttransfer' editing and involves deacylation of mischarged Val-tRNA(Ile). The protein is Isoleucine--tRNA ligase of Brucella suis biovar 1 (strain 1330).